Consider the following 502-residue polypeptide: MRQSIKGRALRHFTLSTGKSAGRNSSGRITVFHRGGGSKRLQRKIDLKRSTSSIGIVERIEYDPNRSSRIALVRWIEGVLPGRQRKFKTIEEFALPRKILESTTATIFCLFSFSSLSSPLAQGETASLSFGSSLGFPRIAVAGAKPAFFAERMREKKIGKKTFSLCEIRKWRTHCVLWAHRIKRKAALSWQSLRQQKTLELVGAAEHNESKLKADQGSLLPRQVLAYALCSGRPSYLHASRSFYKALLPVEASRFGSLPAKPPIGEGPKDGAYKVDRAPVTYILASHQLEAGNMVINCDCSKPSKSGFLRPAQNAHTYLRFQELGRTVNKGRVEGGSQLAASWPRPPAYRHEILDLNSKVGNSIPLADIRMGTWVHDIECHPGQGAKLARAAGTYAKIIKEPASQCLVRLPSGVEKLIDSRCRATIGIVSNPNHGARKLRKAGQSRWSGRRPIVRGVAMNPVDHPHGGGEGRTKGGRPSVSPWGKPTKAGFRAGVGVGKRRI.

Residues 458–502 (AMNPVDHPHGGGEGRTKGGRPSVSPWGKPTKAGFRAGVGVGKRRI) form a disordered region. Residues 463 to 473 (DHPHGGGEGRT) show a composition bias toward basic and acidic residues. Over residues 493–502 (AGVGVGKRRI) the composition is skewed to gly residues.

The protein belongs to the universal ribosomal protein uL2 family.

The protein localises to the mitochondrion. The chain is Large ribosomal subunit protein uL2m (RPL2) from Oryza sativa (Rice).